The chain runs to 96 residues: Large ribosomal subunit protein eL14 (96 aa).

The protein belongs to the eukaryotic ribosomal protein eL14 family.

The protein is Large ribosomal subunit protein eL14 of Metallosphaera sedula (strain ATCC 51363 / DSM 5348 / JCM 9185 / NBRC 15509 / TH2).